The following is a 241-amino-acid chain: Phycocyanobilin:ferredoxin oxidoreductase (241 aa).

The protein belongs to the HY2 family.

The enzyme catalyses (2R,3Z)-phycocyanobilin + 4 oxidized [2Fe-2S]-[ferredoxin] = biliverdin IXalpha + 4 reduced [2Fe-2S]-[ferredoxin] + 4 H(+). In terms of biological role, catalyzes the four-electron reduction of biliverdin IX-alpha (2-electron reduction at both the A and D rings); the reaction proceeds via an isolatable 2-electron intermediate, 181,182-dihydrobiliverdin. This chain is Phycocyanobilin:ferredoxin oxidoreductase, found in Prochlorococcus marinus (strain MIT 9312).